The chain runs to 680 residues: Lipase 1 (680 aa).

A signal peptide spans 1-34 (MKSQNKYSIRKFSVGASSILIATLLFLSGGQAQA). A propeptide spanning residues 35 to 290 (AEKQVNMGNS…AKAKGDQTNK (256 aa)) is cleaved from the precursor. 2 disordered regions span residues 39–58 (VNMGNSQEDTVTAQSIGDQQ) and 82–260 (KNLH…KNGL). Polar residues predominate over residues 40-58 (NMGNSQEDTVTAQSIGDQQ). The segment covering 84–112 (LHNDKTISEENHRKTDDLNKDQLKDDKKS) has biased composition (basic and acidic residues). Composition is skewed to polar residues over residues 162 to 193 (SQDLNANNNLPSQSRTKVSPSLNKSDQTSQRE) and 204 to 223 (QPQQKNQANDKITDHNFNNE). Over residues 224 to 234 (QEVKPQKDEKT) the composition is skewed to basic and acidic residues. Residues 235-246 (LSVSDLKNNQKS) are compositionally biased toward polar residues. Catalysis depends on serine 408, which acts as the Nucleophile. Aspartate 600 (charge relay system) is an active-site residue. A Ca(2+)-binding site is contributed by aspartate 638. Histidine 639 acts as the Charge relay system in catalysis. Residues aspartate 641, aspartate 646, and aspartate 649 each coordinate Ca(2+).

The protein belongs to the AB hydrolase superfamily. Lipase family.

It is found in the secreted. The enzyme catalyses a triacylglycerol + H2O = a diacylglycerol + a fatty acid + H(+). In Staphylococcus aureus (strain MRSA252), this protein is Lipase 1 (lip1).